Consider the following 642-residue polypeptide: Bifunctional protein glk (642 aa).

The tract at residues 1–340 (MSTGAQSKAV…QLSNRSGGAS (340 aa)) is glucokinase. Residue 23-28 (ADVGGT) participates in ATP binding. The HTH rpiR-type domain maps to 341–417 (SAVFERIRQM…LKLATGLTGT (77 aa)). Residues 341–642 (SAVFERIRQM…SPAAKDVARD (302 aa)) are putative HTH-type transcriptional regulator. A DNA-binding region (H-T-H motif) is located at residues 377 to 396 (IVDIARKADVSQPTVIRFCR). One can recognise an SIS domain in the interval 461–600 (AIEILNGARR…AVGVAIRRAS (140 aa)). The helical transmembrane segment at 576-596 (SMISRILHLLMIDILAVGVAI) threads the bilayer.

It in the N-terminal section; belongs to the bacterial glucokinase family.

The protein localises to the membrane. It catalyses the reaction D-glucose + ATP = D-glucose 6-phosphate + ADP + H(+). This Burkholderia orbicola (strain AU 1054) protein is Bifunctional protein glk (glk).